A 270-amino-acid chain; its full sequence is Formamidopyrimidine-DNA glycosylase (270 aa).

Catalysis depends on Pro-2, which acts as the Schiff-base intermediate with DNA. Residue Glu-3 is the Proton donor of the active site. Lys-58 serves as the catalytic Proton donor; for beta-elimination activity. DNA is bound by residues His-90, Arg-109, and Arg-152. The FPG-type zinc-finger motif lies at 237–270; the sequence is RVYGREGEPCQCGGVVKRIVQGGRSTFFCPRCQK. The Proton donor; for delta-elimination activity role is filled by Arg-260.

Belongs to the FPG family. As to quaternary structure, monomer. The cofactor is Zn(2+).

It catalyses the reaction Hydrolysis of DNA containing ring-opened 7-methylguanine residues, releasing 2,6-diamino-4-hydroxy-5-(N-methyl)formamidopyrimidine.. It carries out the reaction 2'-deoxyribonucleotide-(2'-deoxyribose 5'-phosphate)-2'-deoxyribonucleotide-DNA = a 3'-end 2'-deoxyribonucleotide-(2,3-dehydro-2,3-deoxyribose 5'-phosphate)-DNA + a 5'-end 5'-phospho-2'-deoxyribonucleoside-DNA + H(+). Involved in base excision repair of DNA damaged by oxidation or by mutagenic agents. Acts as a DNA glycosylase that recognizes and removes damaged bases. Has a preference for oxidized purines, such as 7,8-dihydro-8-oxoguanine (8-oxoG). Has AP (apurinic/apyrimidinic) lyase activity and introduces nicks in the DNA strand. Cleaves the DNA backbone by beta-delta elimination to generate a single-strand break at the site of the removed base with both 3'- and 5'-phosphates. This Novosphingobium aromaticivorans (strain ATCC 700278 / DSM 12444 / CCUG 56034 / CIP 105152 / NBRC 16084 / F199) protein is Formamidopyrimidine-DNA glycosylase.